Here is a 195-residue protein sequence, read N- to C-terminus: Probable GTP-binding protein EngB (195 aa).

An EngB-type G domain is found at 24–195 (ELPEIALAGR…EAWDAILEKL (172 aa)). GTP is bound by residues 32–39 (GRSNVGKS), 59–63 (GKTQL), 77–80 (DVPG), 144–147 (TKAD), and 176–178 (FSS). Mg(2+) contacts are provided by Ser39 and Thr61.

It belongs to the TRAFAC class TrmE-Era-EngA-EngB-Septin-like GTPase superfamily. EngB GTPase family. Mg(2+) is required as a cofactor.

Necessary for normal cell division and for the maintenance of normal septation. The sequence is that of Probable GTP-binding protein EngB from Streptococcus pneumoniae (strain P1031).